The primary structure comprises 77 residues: Small integral membrane protein 7 (77 aa).

The N-terminal stretch at 1–17 (MIGDLLIFGTLLMNAGA) is a signal peptide. The Extracellular portion of the chain corresponds to 18–55 (VLNFKLKKRETQSQGFGDDSGSSSTGENIREFLLSLRY). Residues 56–76 (FRIFIALWNIFMMFCMIVLFG) traverse the membrane as a helical segment. Position 77 (serine 77) is a topological domain, cytoplasmic.

This sequence belongs to the SMIM7 family.

It is found in the membrane. In Danio rerio (Zebrafish), this protein is Small integral membrane protein 7 (smim7).